We begin with the raw amino-acid sequence, 223 residues long: Ribose-5-phosphate isomerase A (223 aa).

Residues 29 to 32 (TGST), 82 to 85 (DGAD), and 95 to 98 (KGGG) contribute to the substrate site. Glutamate 104 serves as the catalytic Proton acceptor. Substrate is bound at residue lysine 122.

Belongs to the ribose 5-phosphate isomerase family. Homodimer.

The catalysed reaction is aldehydo-D-ribose 5-phosphate = D-ribulose 5-phosphate. Its pathway is carbohydrate degradation; pentose phosphate pathway; D-ribose 5-phosphate from D-ribulose 5-phosphate (non-oxidative stage): step 1/1. Its function is as follows. Catalyzes the reversible conversion of ribose-5-phosphate to ribulose 5-phosphate. The chain is Ribose-5-phosphate isomerase A from Neisseria meningitidis serogroup B (strain ATCC BAA-335 / MC58).